The primary structure comprises 358 residues: tRNA N6-adenosine threonylcarbamoyltransferase (358 aa).

Residues His111 and His115 each contribute to the Fe cation site. Residues 146–150 (LVSGG), Asp179, Gly192, and Asn294 each bind substrate. Position 322 (Asp322) interacts with Fe cation.

The protein belongs to the KAE1 / TsaD family. Requires Fe(2+) as cofactor.

The protein localises to the cytoplasm. The enzyme catalyses L-threonylcarbamoyladenylate + adenosine(37) in tRNA = N(6)-L-threonylcarbamoyladenosine(37) in tRNA + AMP + H(+). Required for the formation of a threonylcarbamoyl group on adenosine at position 37 (t(6)A37) in tRNAs that read codons beginning with adenine. Is involved in the transfer of the threonylcarbamoyl moiety of threonylcarbamoyl-AMP (TC-AMP) to the N6 group of A37, together with TsaE and TsaB. TsaD likely plays a direct catalytic role in this reaction. This chain is tRNA N6-adenosine threonylcarbamoyltransferase, found in Helicobacter hepaticus (strain ATCC 51449 / 3B1).